We begin with the raw amino-acid sequence, 1448 residues long: MDNNVEYELKEVSIQEGGSNLNINTPSGMSDGDFNSGANSPDIVKSENDFDKLAESLEKESKQYFAAQDNENNAGESEEDFKLRRYFENSQRMALSNGSKPKKMSICIRNLTVVGRGADLSVIADLLTPFNWFISLFKPSTWKIEKTSTFNILNNVTCFNRDGQMLLVLGRPGAGCSTLLRLISNQRGSYISVDGDIKYGGIPAKEWERYKGEAIYTPEEDSHHPTLTVRETLDFALKCKTIHNRLPDEKKVTFREKISSLLLSMFGIVHQADTIVGNEYIRGLSGGERKRLTITEAMVSSASITCWDCSTRGLDAASALDYAKSIRIMSDTLHKTSIASFYQASDSIYNLFDNVLVLEKGRCIYFGPVGQAKQYFLDLGFDCEPRKSVPDFLTGVTNPQERIIRKGFEGRVPETSADFEQAWKASELCREMERQQTEHEKKIEVEQPHLDFIEEVRANKSKTNTKTSVYTTSFPTQVRALIVRHSQIIWGDKFSLVSRYLSVIIQSFVYGSVFYNMQTNLSGLFTRGGAIFAAILFNAFLSEGELFATFYGRRILQKQQSYAMYRPSAFHIAQVVTDIPLTTVQVFLFSIVVYFMFGLQYEAGKFFIFCFTLIGATLATTNMFRAFGNLSPSLYVSQNVMTGILIFMISYCGYSIPKNKMHPWFGWFFWANPFTYAFKALMANEFMDLNFSCETEAIPYGTDPTTGAPYDNSVRVCASAGSRPNTLEVKGSDYLMDALTFKSDDRTLNIFITYLWWVLFIIINMVAVEYLEWTSGGFTTKTYKKGKAPKLNDAEEERKQNEIVAKATSEMKDTLKMRGGVFTWENIKYTVPVGKTQKLLLDDVEGWIKPGQMTALMGSSGAGKTTLLDVLAKRKTLGTVQGKTFLNGKALEIDFERITGYVEQMDVHNPGLTVREALRFSAKLRQEPSVSLEEKYDYVEHVLEMMEMKHLGDALVGTLETGVGISVEERKRLTIGVELVAKPHILFLDEPTSGLDAQSSYNIVKFIRKLADAGMPLVCTIHQPSSVLFEHFDRILLLAKGGKTVYFGDIGERSKTLTSYFERQGVRPCTEFENPAEYILEATGAGVHGKTEINWPEVWKQSPELQEVRRELSSLEASGSSSSSNENGVPREFATSIWYQTWEVYKRMNVIYFRDPFYAYGSILQAVMTGIIVGFTFWDLKDSSSDMNQRIFFIFQALLLGILLIFVVMVQFLVQKEYFKRDYASKFYSWFPFAISIVLVEIPYTIVCGSVFFFCSFWTAGLFMEGQNGANFYFWIIFIIYLFFCVSFGGAIAAVCNHMFLAMTLVPLLIVFLFLFCGVMVPPSQIPTFWKGWVYHLNPCRYFMEGIITNVLEHQKVNCSYEDLTKFNNPTTLTCEEYFVPATGYVTNTTSDNSECGYCIFNSGEQYYKTLEWDASNKGRSIAILIAFWMFNIFLVVSFVYLTRKPSR.

Positions 16-28 (EGGSNLNINTPSG) are enriched in polar residues. Residues 16 to 41 (EGGSNLNINTPSGMSDGDFNSGANSP) form a disordered region. The region spanning 136–385 (LFKPSTWKIE…FLDLGFDCEP (250 aa)) is the ABC transporter 1 domain. The ABC transmembrane type-2 1 domain maps to 490-717 (WGDKFSLVSR…APYDNSVRVC (228 aa)). 7 consecutive transmembrane segments (helical) span residues 494 to 514 (FSLV…GSVF), 530 to 550 (AIFA…FATF), 579 to 599 (IPLT…MFGL), 604 to 624 (GKFF…TNMF), 634 to 654 (LYVS…YCGY), 663 to 683 (PWFG…ALMA), and 748 to 768 (LNIF…MVAV). Residues 822–1066 (FTWENIKYTV…LTSYFERQGV (245 aa)) enclose the ABC transporter 2 domain. ATP is bound at residue 858-865 (GSSGAGKT). The next 6 membrane-spanning stretches (helical) occupy residues 1157–1177 (FYAY…GFTF), 1191–1211 (IFFI…VMVQ), 1233–1253 (FAIS…SVFF), 1272–1292 (FYFW…GGAI), 1299–1319 (MFLA…FCGV), and 1422–1442 (IAIL…FVYL). One can recognise an ABC transmembrane type-2 2 domain in the interval 1157-1389 (FYAYGSILQA…VPATGYVTNT (233 aa)).

This sequence belongs to the ABC transporter superfamily. ABCG family. PDR (TC 3.A.1.205) subfamily.

It localises to the membrane. The protein is ABC transporter G family member 9 (abcG9) of Dictyostelium discoideum (Social amoeba).